Consider the following 253-residue polypeptide: MTTIDLNCDLGESFGAYKMGNDDEILPFVSSINVACGFHAGDPSVMRQTVEKAMQHNVAIGAHPGFPDLIGFGRRNMNVSANEVYDYVLYQIGALDAFVKAAGGKMQHVKPHGALYNMAATNPEIADAIAKAIYHMNSSLSLYGLANSEAFIQAAEKYNITLVQEAFADRTYKQDGTLTSRTEENALIKNEDEAINQVLQMVKEGYVNSVNGEKVAVQAQTICLHGDGEKAVQFARKIYRIFERNKISICAPK.

The protein belongs to the LamB/PxpA family. In terms of assembly, forms a complex composed of PxpA, PxpB and PxpC.

It carries out the reaction 5-oxo-L-proline + ATP + 2 H2O = L-glutamate + ADP + phosphate + H(+). Catalyzes the cleavage of 5-oxoproline to form L-glutamate coupled to the hydrolysis of ATP to ADP and inorganic phosphate. This chain is 5-oxoprolinase subunit A, found in Bacillus cereus (strain AH820).